Here is a 328-residue protein sequence, read N- to C-terminus: Nickel import system permease protein NikB (328 aa).

Helical transmembrane passes span 11-31 (LIQM…LMKL), 104-124 (LLIS…LGII), 139-159 (VIST…LLFI), 170-190 (ILSQ…AYII), 229-249 (ILPI…GTVV), and 279-299 (VLFI…LTLL). The ABC transmembrane type-1 domain occupies 100 to 297 (APITLLISFS…IINTIADLLT (198 aa)).

This sequence belongs to the binding-protein-dependent transport system permease family. OppBC subfamily. In terms of assembly, the complex is composed of two ATP-binding proteins (NikD and NikE), two transmembrane proteins (NikB and NikC) and a solute-binding protein (NikA).

Its subcellular location is the cell membrane. Part of the ABC transporter complex NikABCDE (Opp2) involved in nickel import. Probably responsible for the translocation of the substrate across the membrane. This chain is Nickel import system permease protein NikB, found in Staphylococcus aureus (strain MRSA252).